The following is a 354-amino-acid chain: Yop proteins translocation protein U (354 aa).

The segment at 1-20 (MSGEKTEQPTPKKIRDARKK) is disordered. The next 5 membrane-spanning stretches (helical) occupy residues 30 to 50 (VSTA…DYYF), 79 to 99 (VLLE…LMAI), 138 to 158 (VEFL…WIII), 163 to 183 (VTLL…LGQI), and 187 to 207 (LMVI…AFEY).

Belongs to the type III secretion exporter family.

The protein resides in the cell membrane. Its function is as follows. Component of the yop secretion machinery. This Yersinia pestis protein is Yop proteins translocation protein U (yscU).